Reading from the N-terminus, the 36-residue chain is Photosystem II reaction center protein Y (36 aa).

The Lumenal portion of the chain corresponds to Met-1 to Arg-4. A helical transmembrane segment spans residues Leu-5–Ile-23. Topologically, residues Gly-24 to Arg-36 are stromal.

It belongs to the PsbY family. In terms of assembly, PSII is composed of 1 copy each of membrane proteins PsbA, PsbB, PsbC, PsbD, PsbE, PsbF, PsbH, PsbI, PsbJ, PsbK, PsbL, PsbM, PsbT, PsbX, PsbY, PsbZ, Psb30/Ycf12, at least 3 peripheral proteins of the oxygen-evolving complex and a large number of cofactors. It forms dimeric complexes.

The protein resides in the plastid. Its subcellular location is the chloroplast thylakoid membrane. In terms of biological role, loosely associated component of the core of photosystem II (PSII), it is not always seen in crystals. PSII is a light-driven water plastoquinone oxidoreductase, using light energy to abstract electrons from H(2)O, generating a proton gradient subsequently used for ATP formation. In Phaeodactylum tricornutum (strain CCAP 1055/1), this protein is Photosystem II reaction center protein Y.